The following is a 369-amino-acid chain: 3-dehydroquinate synthase (369 aa).

Residues D70–K75, G104–D108, T128–T129, K141, K150, and T168–T171 each bind NAD(+). Positions 183, 246, and 262 each coordinate Zn(2+).

Belongs to the sugar phosphate cyclases superfamily. Dehydroquinate synthase family. It depends on Co(2+) as a cofactor. Zn(2+) is required as a cofactor. NAD(+) serves as cofactor.

The protein localises to the cytoplasm. The enzyme catalyses 7-phospho-2-dehydro-3-deoxy-D-arabino-heptonate = 3-dehydroquinate + phosphate. The protein operates within metabolic intermediate biosynthesis; chorismate biosynthesis; chorismate from D-erythrose 4-phosphate and phosphoenolpyruvate: step 2/7. Catalyzes the conversion of 3-deoxy-D-arabino-heptulosonate 7-phosphate (DAHP) to dehydroquinate (DHQ). This is 3-dehydroquinate synthase from Rhodococcus erythropolis (strain PR4 / NBRC 100887).